A 31-amino-acid chain; its full sequence is Antifungal protein 1 (31 aa).

It is found in the secreted. Functionally, antifungal activity against C.albicans ATCC 76615. In Musca domestica (House fly), this protein is Antifungal protein 1.